Here is a 333-residue protein sequence, read N- to C-terminus: tRNA U34 carboxymethyltransferase (333 aa).

Carboxy-S-adenosyl-L-methionine-binding positions include Lys97, Trp111, Lys116, Gly136, 158-160 (DPS), 189-190 (IE), Met205, Tyr209, and Arg324.

It belongs to the class I-like SAM-binding methyltransferase superfamily. CmoB family. Homotetramer.

The enzyme catalyses carboxy-S-adenosyl-L-methionine + 5-hydroxyuridine(34) in tRNA = 5-carboxymethoxyuridine(34) in tRNA + S-adenosyl-L-homocysteine + H(+). Functionally, catalyzes carboxymethyl transfer from carboxy-S-adenosyl-L-methionine (Cx-SAM) to 5-hydroxyuridine (ho5U) to form 5-carboxymethoxyuridine (cmo5U) at position 34 in tRNAs. The polypeptide is tRNA U34 carboxymethyltransferase (Chromohalobacter salexigens (strain ATCC BAA-138 / DSM 3043 / CIP 106854 / NCIMB 13768 / 1H11)).